Consider the following 748-residue polypeptide: Histone-lysine N-methyltransferase EZH2 (748 aa).

The span at 183-199 shows a compositional bias: acidic residues; sequence DYEDDEDGEDNQDDERD. Disordered regions lie at residues 183-215 and 347-428; these read DYED…KETL and TPPK…NIEP. Residues 200–215 show a composition bias toward basic and acidic residues; sequence DITKDQDDNMEEKETL. Basic residues predominate over residues 348–359; that stretch reads PPKRPSGRRRGR. Residues 376–387 show a composition bias toward basic and acidic residues; sequence EAKDTDSDREAG. A CXC domain is found at 505 to 607; sequence CRKIQLKKDG…SKNVSCKNCS (103 aa). One can recognise an SET domain in the interval 614 to 729; sequence KHLLLAPSDV…TGEELFFDYR (116 aa).

The protein belongs to the class V-like SAM-binding methyltransferase superfamily. Histone-lysine methyltransferase family. EZ subfamily. In terms of assembly, component of the prc2/eed-ezh2 complex.

The protein resides in the nucleus. The catalysed reaction is L-lysyl(27)-[histone H3] + 3 S-adenosyl-L-methionine = N(6),N(6),N(6)-trimethyl-L-lysyl(27)-[histone H3] + 3 S-adenosyl-L-homocysteine + 3 H(+). Its function is as follows. Polycomb group (PcG) protein. Catalytic subunit of the prc2/eed-ezh2 complex, which methylates 'Lys-9' and 'Lys-27' of histone H3, leading to transcriptional repression of the affected target gene. May regulate the circadian clock via histone methylation at the promoter of the circadian genes. This is Histone-lysine N-methyltransferase EZH2 (ezh2-b) from Xenopus laevis (African clawed frog).